The sequence spans 427 residues: Trigger factor (427 aa).

The PPIase FKBP-type domain occupies 163-248; the sequence is GDTVVIDFVG…IHEVKTKEVP (86 aa).

This sequence belongs to the FKBP-type PPIase family. Tig subfamily.

It localises to the cytoplasm. It carries out the reaction [protein]-peptidylproline (omega=180) = [protein]-peptidylproline (omega=0). In terms of biological role, involved in protein export. Acts as a chaperone by maintaining the newly synthesized protein in an open conformation. Functions as a peptidyl-prolyl cis-trans isomerase. The protein is Trigger factor of Streptococcus agalactiae serotype III (strain NEM316).